Consider the following 355-residue polypeptide: Cobalt-precorrin-5B C(1)-methyltransferase (355 aa).

Belongs to the CbiD family.

It catalyses the reaction Co-precorrin-5B + S-adenosyl-L-methionine = Co-precorrin-6A + S-adenosyl-L-homocysteine. The protein operates within cofactor biosynthesis; adenosylcobalamin biosynthesis; cob(II)yrinate a,c-diamide from sirohydrochlorin (anaerobic route): step 6/10. Functionally, catalyzes the methylation of C-1 in cobalt-precorrin-5B to form cobalt-precorrin-6A. This is Cobalt-precorrin-5B C(1)-methyltransferase from Sulfolobus acidocaldarius (strain ATCC 33909 / DSM 639 / JCM 8929 / NBRC 15157 / NCIMB 11770).